A 377-amino-acid polypeptide reads, in one-letter code: uncharacterized protein (377 aa).

2 helical membrane-spanning segments follow: residues 71–91 (IIATATSVPLTVGAYGILVGS) and 140–160 (AEAAITIATPIAVLYFVPTLF).

It localises to the membrane. This is an uncharacterized protein from Coxiella burnetii (strain RSA 493 / Nine Mile phase I).